The chain runs to 445 residues: MKVKMLSRNPDNYVRETKLDLQRVPRNYDPTLHPFEVPREYVRALNATKLERVFAKPFLASLDGHRDGVNCLAKHPKNLATVLSGACDGEVRIWNLTQRNCIRTIQAHEGFVRGICTRFCGTSFFTVGDDKTVKQWKMDGPGYGDEEEPLHTILGKTVYTGIDHHWKEAVFATCGQQVDIWDEQRTNPVCSMTWGFDSISSVKFNPIETFLLGSCASDRNIVLYDMRQATPLKKVILDMRTNTICWNPMEAFIFTAANEDYNLYTFDMSALDTPVMVHMDHVSAVLDVDYSPTGKEFVSASFDKSIRIFPVDKSRSREVYHTKRMQHVICVKWTSDSKYIMCGSDEMNIRLWKANASEKLGVLTSREKAAKDYNQKLKEKFQHYPHIKRIARHRHLPKSIYSQIQEQRIMKEARRRKEVNRIKHSKPGSVPIVSEKKKHVVAVVK.

Position 49 is an N6-acetyllysine (Lys49). 7 WD repeats span residues 64 to 104, 107 to 146, 149 to 191, 194 to 234, 236 to 276, 280 to 319, and 323 to 362; these read GHRD…CIRT, AHEG…YGDE, PLHT…PVCS, WGFD…PLKK, ILDM…TPVM, DHVS…SREV, and KRMQ…KLGV. The tract at residues 353 to 441 is required for nucleolar location; that stretch reads KANASEKLGV…IVSEKKKHVV (89 aa).

It belongs to the WD repeat DCAF13/WDSOF1 family. In terms of assembly, part of the small subunit (SSU) processome, composed of more than 70 proteins and the RNA chaperone small nucleolar RNA (snoRNA) U3. Component of the DCX(DCAF13) E3 ubiquitin ligase complex, at least composed of CUL4 (CUL4A or CUL4B), DDB1, DCAF13 and RBX1. Interacts (via WD40 domain) with DDB1. Interacts with ESR1 and LATS1.

The protein localises to the nucleus. It is found in the nucleolus. The protein operates within protein modification; protein ubiquitination. Its function is as follows. Part of the small subunit (SSU) processome, first precursor of the small eukaryotic ribosomal subunit. During the assembly of the SSU processome in the nucleolus, many ribosome biogenesis factors, an RNA chaperone and ribosomal proteins associate with the nascent pre-rRNA and work in concert to generate RNA folding, modifications, rearrangements and cleavage as well as targeted degradation of pre-ribosomal RNA by the RNA exosome. Participates in the 18S rRNA processing in growing oocytes, being essential for oocyte nonsurrounded nucleolus (NSN) to surrounded nucleolus (SN) transition. Functionally, substrate-recognition component of a DCX (DDB1-CUL4-X-box) E3 ubiquitin-protein ligase complex that plays a key role in embryo preimplantation and is required for normal meiotic cycle progression in oocytes. Acts as a maternal factor that regulates oocyte and zygotic chromatin tightness during maternal to zygotic transition. Also involved in the transformation of the endometrium into the decidua, known as decidualization, providing a solid foundation for implantation of blastocysts. Recognizes the histone methyltransferases SUV39H1 and SUV39H2 and directs them to polyubiquitination and proteasomal degradation, which facilitates the H3K9me3 removal and early zygotic gene expression, essential steps for progressive genome reprogramming and the establishment of pluripotency during preimplantation embryonic development. Supports the spindle assembly and chromosome condensation during oocyte meiotic division by targeting the polyubiquitination and degradation of PTEN, a lipid phosphatase that inhibits PI3K pathway as well as oocyte growth and maturation. Targets PMP22 for polyubiquitination and proteasomal degradation. This Pongo abelii (Sumatran orangutan) protein is DDB1- and CUL4-associated factor 13 (DCAF13).